A 445-amino-acid polypeptide reads, in one-letter code: Oxysterols receptor LXR-alpha (445 aa).

Disordered regions lie at residues M1–N34 and T62–P86. Positions M1 to E94 are transactivation AF-1; required for ligand-independent transactivation function. Residues N93–S168 constitute a DNA-binding region (nuclear receptor). 2 NR C4-type zinc fingers span residues C96–C116 and C132–C156. Residues K178–V200 form a disordered region. A compositionally biased stretch (low complexity) spans S189 to V200. S191 bears the Phosphoserine mark. The segment at Q203–E445 is transactivation AF-2; required for ligand-dependent transactivation function; mediates interaction with CCAR2. Positions E207 to E445 constitute an NR LBD domain.

This sequence belongs to the nuclear hormone receptor family. NR1 subfamily. As to quaternary structure, heterodimer of NR1H3 and RXR (retinoic acid receptor). Interacts with CCAR2 (via N-terminus) in a ligand-independent manner. Interacts with SIRT1 and this interaction is inhibited by CCAR2. Post-translationally, ubiquitinated by UBR5, leading to its degradation: UBR5 specifically recognizes and binds ligand-bound NR1H3 when it is not associated with coactivators (NCOAs). In presence of NCOAs, the UBR5-degron is not accessible, preventing its ubiquitination and degradation. In terms of tissue distribution, in adults it is expressed in spleen, pituitary, lung, liver, and fat. Weaker expression is observed in several other tissues.

It localises to the nucleus. Its subcellular location is the cytoplasm. Its function is as follows. Nuclear receptor that exhibits a ligand-dependent transcriptional activation activity. Interaction with retinoic acid receptor (RXR) shifts RXR from its role as a silent DNA-binding partner to an active ligand-binding subunit in mediating retinoid responses through target genes defined by LXRES. LXRES are DR4-type response elements characterized by direct repeats of two similar hexanuclotide half-sites spaced by four nucleotides. Plays an important role in the regulation of cholesterol homeostasis, regulating cholesterol uptake through MYLIP-dependent ubiquitination of LDLR, VLDLR and LRP8. Interplays functionally with RORA for the regulation of genes involved in liver metabolism. Induces LPCAT3-dependent phospholipid remodeling in endoplasmic reticulum (ER) membranes of hepatocytes, driving SREBF1 processing and lipogenesis. Via LPCAT3, triggers the incorporation of arachidonate into phosphatidylcholines of ER membranes, increasing membrane dynamics and enabling triacylglycerols transfer to nascent very low-density lipoprotein (VLDL) particles. Via LPCAT3 also counteracts lipid-induced ER stress response and inflammation, likely by modulating SRC kinase membrane compartmentalization and limiting the synthesis of lipid inflammatory mediators. In Rattus norvegicus (Rat), this protein is Oxysterols receptor LXR-alpha (Nr1h3).